A 432-amino-acid polypeptide reads, in one-letter code: Adenylosuccinate synthetase (432 aa).

GTP is bound by residues 13–19 and 41–43; these read GDEGKGK and GHT. Aspartate 14 (proton acceptor) is an active-site residue. Mg(2+) is bound by residues aspartate 14 and glycine 41. IMP-binding positions include 14–17, 39–42, threonine 130, arginine 144, glutamine 225, threonine 240, and arginine 304; these read DEGK and NAGH. Histidine 42 functions as the Proton donor in the catalytic mechanism. 300 to 306 is a binding site for substrate; that stretch reads AVTGRPR. GTP-binding positions include arginine 306, 332–334, and 415–417; these read KLD and STG.

This sequence belongs to the adenylosuccinate synthetase family. In terms of assembly, homodimer. Requires Mg(2+) as cofactor.

Its subcellular location is the cytoplasm. It catalyses the reaction IMP + L-aspartate + GTP = N(6)-(1,2-dicarboxyethyl)-AMP + GDP + phosphate + 2 H(+). It participates in purine metabolism; AMP biosynthesis via de novo pathway; AMP from IMP: step 1/2. In terms of biological role, plays an important role in the de novo pathway of purine nucleotide biosynthesis. Catalyzes the first committed step in the biosynthesis of AMP from IMP. This is Adenylosuccinate synthetase from Haemophilus influenzae (strain ATCC 51907 / DSM 11121 / KW20 / Rd).